The sequence spans 445 residues: 2-oxoisovalerate dehydrogenase subunit alpha, mitochondrial (445 aa).

The transit peptide at 1–45 (MAVAIAAARVWRLNRGLSQAALLLLRRPGARGLARSHPRRQQQQF) directs the protein to the mitochondrion. The disordered stretch occupies residues 33-54 (LARSHPRRQQQQFSSLDDKPQF). Thiamine diphosphate-binding residues include Tyr158 and Arg159. Residue Ser206 participates in K(+) binding. Ser207 contacts thiamine diphosphate. Positions 208, 211, and 212 each coordinate K(+). Glu238 is a Mg(2+) binding site. Gly239, Ala240, and Arg265 together coordinate thiamine diphosphate. Asn267 and Tyr269 together coordinate Mg(2+). Residue His336 participates in thiamine diphosphate binding. Ser337 bears the Phosphoserine; by BCKDK mark. Phosphothreonine is present on Thr338. Ser339 and Ser347 each carry phosphoserine. Lys356 carries the N6-acetyllysine; alternate modification. Residue Lys356 is modified to N6-succinyllysine; alternate. Lys380 is modified (N6-succinyllysine).

The protein belongs to the BCKDHA family. As to quaternary structure, heterotetramer of 2 alpha/BCKDHA and 2 beta chains/BCKDHB that forms the branched-chain alpha-keto acid decarboxylase (E1) component of the BCKD complex. The branched-chain alpha-ketoacid dehydrogenase is a large complex composed of three major building blocks E1, E2 and E3. It is organized around E2, a 24-meric cubic core composed of DBT, to which are associated 6 to 12 copies of E1, and approximately 6 copies of the dehydrogenase E3, a DLD dimer. Interacts with PPM1K. Thiamine diphosphate serves as cofactor. The cofactor is Mg(2+). In terms of processing, phosphorylated at Ser-337 by BCKDK and dephosphorylated by protein phosphatase PPM1K.

It localises to the mitochondrion matrix. It carries out the reaction N(6)-[(R)-lipoyl]-L-lysyl-[protein] + 3-methyl-2-oxobutanoate + H(+) = N(6)-[(R)-S(8)-2-methylpropanoyldihydrolipoyl]-L-lysyl-[protein] + CO2. In terms of biological role, together with BCKDHB forms the heterotetrameric E1 subunit of the mitochondrial branched-chain alpha-ketoacid dehydrogenase (BCKD) complex. The BCKD complex catalyzes the multi-step oxidative decarboxylation of alpha-ketoacids derived from the branched-chain amino-acids valine, leucine and isoleucine producing CO2 and acyl-CoA which is subsequently utilized to produce energy. The E1 subunit catalyzes the first step with the decarboxylation of the alpha-ketoacid forming an enzyme-product intermediate. A reductive acylation mediated by the lipoylamide cofactor of E2 extracts the acyl group from the E1 active site for the next step of the reaction. The chain is 2-oxoisovalerate dehydrogenase subunit alpha, mitochondrial (BCKDHA) from Pan troglodytes (Chimpanzee).